Reading from the N-terminus, the 308-residue chain is MGNTLGLAPMGALPRRSPRREEPLPNPGSFDELHRLCKDVFPAQMEGVKLVVNKVLSSHFQVAHTVHMSALGLPGYHLHAAYAGDWQLSPTEVFPTVVGDMDSGGSLNAQVLLLLAERLRAKAVFQTQQAKFLTWQFDGEYRGDDYTATLTLGNPDLIGESVIVVAHFLQSLTHRLVLGGELVYHRRPGEEGAILTLAGKYSAVHWVATLNVGSGGAHASYYHRANEQVQVGVEFEANTRLQDTTFSFGYHLTLPQANMVFRGLVDSNWCVGAVLEKKMPPLPVTLALGAFLNHWRNRFHCGFSITVG.

The tract at residues 1–29 is disordered; the sequence is MGNTLGLAPMGALPRRSPRREEPLPNPGS. The interval 281 to 308 is required for mitochondrial targeting; it reads PLPVTLALGAFLNHWRNRFHCGFSITVG.

The protein belongs to the Tom40 family. As to quaternary structure, forms part of the preprotein translocase of the outer mitochondrial membrane (TOM complex) containing TOMM22, TOMM40, TOMM40L and TOMM70. Interacts with mitochondrial targeting sequences.

It is found in the mitochondrion outer membrane. Potential channel-forming protein implicated in import of protein precursors into mitochondria. This chain is Mitochondrial import receptor subunit TOM40B, found in Bos taurus (Bovine).